A 306-amino-acid polypeptide reads, in one-letter code: D-alanine--D-alanine ligase B (306 aa).

Residues 101–303 (KLLWQGAGLP…FSQLVVRILE (203 aa)) form the ATP-grasp domain. Residue 134–189 (ISALGLPLIVKPSREGSSVGMTKVVEENALQGALSLAFQHDDEILIEKWLCGPEFT) coordinates ATP. Asp-257, Glu-270, and Asn-272 together coordinate Mg(2+).

It belongs to the D-alanine--D-alanine ligase family. As to quaternary structure, monomer. Mg(2+) is required as a cofactor. It depends on Mn(2+) as a cofactor.

It localises to the cytoplasm. The enzyme catalyses 2 D-alanine + ATP = D-alanyl-D-alanine + ADP + phosphate + H(+). It participates in cell wall biogenesis; peptidoglycan biosynthesis. In terms of biological role, cell wall formation. This chain is D-alanine--D-alanine ligase B (ddlB), found in Salmonella typhimurium (strain LT2 / SGSC1412 / ATCC 700720).